The primary structure comprises 425 residues: Tol-Pal system protein TolB (425 aa).

An N-terminal signal peptide occupies residues 1–23 (MQMMKKRILLCLLVGMTCLPVLA).

This sequence belongs to the TolB family. As to quaternary structure, the Tol-Pal system is composed of five core proteins: the inner membrane proteins TolA, TolQ and TolR, the periplasmic protein TolB and the outer membrane protein Pal. They form a network linking the inner and outer membranes and the peptidoglycan layer.

It localises to the periplasm. Its function is as follows. Part of the Tol-Pal system, which plays a role in outer membrane invagination during cell division and is important for maintaining outer membrane integrity. In Albidiferax ferrireducens (strain ATCC BAA-621 / DSM 15236 / T118) (Rhodoferax ferrireducens), this protein is Tol-Pal system protein TolB.